A 38-amino-acid polypeptide reads, in one-letter code: Spheniscin-2 (38 aa).

Cystine bridges form between cysteine 5–cysteine 33, cysteine 12–cysteine 27, and cysteine 17–cysteine 34.

In terms of assembly, monomer. Secreted into the stomach cavity.

It localises to the secreted. Has antifungal activity and antibacterial activity against Gram-positive and Gram-negative bacteria. Involved in the process of food preservation in the stomach during the incubation fast. May also be present during infection. This is Spheniscin-2 from Aptenodytes patagonicus (King penguin).